Reading from the N-terminus, the 256-residue chain is Trypsinogen-like protein 3 (256 aa).

An N-terminal signal peptide occupies residues Met1–Ala14. The Peptidase S1 domain occupies Ser15 to Ala237. 6 disulfide bridges follow: Cys23–Cys153, Cys41–Cys57, Cys125–Cys226, Cys132–Cys199, Cys164–Cys180, and Cys189–Cys213.

This sequence belongs to the peptidase S1 family.

The sequence is that of Trypsinogen-like protein 3 (trp3) from Pseudopleuronectes americanus (Winter flounder).